Consider the following 100-residue polypeptide: Urease subunit gamma (100 aa).

Belongs to the urease gamma subunit family. Heterotrimer of UreA (gamma), UreB (beta) and UreC (alpha) subunits. Three heterotrimers associate to form the active enzyme.

It is found in the cytoplasm. It catalyses the reaction urea + 2 H2O + H(+) = hydrogencarbonate + 2 NH4(+). Its pathway is nitrogen metabolism; urea degradation; CO(2) and NH(3) from urea (urease route): step 1/1. This Corynebacterium glutamicum (strain R) protein is Urease subunit gamma.